Reading from the N-terminus, the 333-residue chain is Acetyltransferase Pat (333 aa).

Residues 88–91 (GEIA), 98–99 (RS), and Arg-138 contribute to the 3',5'-cyclic AMP site. The N-acetyltransferase domain occupies 156–318 (LMLRPVLPGD…GELSLGREMV (163 aa)). His-173 provides a ligand contact to substrate. Asp-214 provides a ligand contact to Mg(2+). Substrate-binding positions include 238-240 (FTV), 246-251 (GRGIGS), Asn-277, and Arg-286.

Homodimer. Mg(2+) serves as cofactor.

Autoinhibited and allosterically activated by 3,5-cyclic adenosine monophosphate (cAMP). An extensive conformational rearrangement relieves this autoinhibition by means of a substrate-mimicking lid that covers the protein-substrate binding surface. Functionally, catalyzes specifically the acetylation of the epsilon-amino group of a highly conserved lysine residue in acetyl-CoA synthetase (ACS). This acetylation results in the inactivation of ACS activity and could be important for mycobacteria to adjust to environmental changes. This chain is Acetyltransferase Pat, found in Mycobacterium tuberculosis (strain ATCC 25618 / H37Rv).